The primary structure comprises 447 residues: N-succinylarginine dihydrolase (447 aa).

Substrate is bound by residues 19–28 (AGLSFGNEAS), asparagine 110, and 137–138 (HR). Glutamate 174 is a catalytic residue. Arginine 212 serves as a coordination point for substrate. Histidine 248 is an active-site residue. Residues aspartate 250 and asparagine 359 each coordinate substrate. The Nucleophile role is filled by cysteine 365.

Belongs to the succinylarginine dihydrolase family. As to quaternary structure, homodimer.

It catalyses the reaction N(2)-succinyl-L-arginine + 2 H2O + 2 H(+) = N(2)-succinyl-L-ornithine + 2 NH4(+) + CO2. Its pathway is amino-acid degradation; L-arginine degradation via AST pathway; L-glutamate and succinate from L-arginine: step 2/5. Functionally, catalyzes the hydrolysis of N(2)-succinylarginine into N(2)-succinylornithine, ammonia and CO(2). This Salmonella typhi protein is N-succinylarginine dihydrolase.